Reading from the N-terminus, the 671-residue chain is UvrABC system protein C (671 aa).

The 80-residue stretch at valine 16–valine 95 folds into the GIY-YIG domain. In terms of domain architecture, UVR spans aspartate 208 to alanine 243. Residues serine 645–threonine 671 form a disordered region.

The protein belongs to the UvrC family. Interacts with UvrB in an incision complex.

It localises to the cytoplasm. In terms of biological role, the UvrABC repair system catalyzes the recognition and processing of DNA lesions. UvrC both incises the 5' and 3' sides of the lesion. The N-terminal half is responsible for the 3' incision and the C-terminal half is responsible for the 5' incision. The protein is UvrABC system protein C of Mycobacteroides abscessus (strain ATCC 19977 / DSM 44196 / CCUG 20993 / CIP 104536 / JCM 13569 / NCTC 13031 / TMC 1543 / L948) (Mycobacterium abscessus).